A 300-amino-acid polypeptide reads, in one-letter code: tRNA pseudouridine synthase B (300 aa).

Aspartate 41 acts as the Nucleophile in catalysis.

This sequence belongs to the pseudouridine synthase TruB family. Type 1 subfamily.

The catalysed reaction is uridine(55) in tRNA = pseudouridine(55) in tRNA. Functionally, responsible for synthesis of pseudouridine from uracil-55 in the psi GC loop of transfer RNAs. This chain is tRNA pseudouridine synthase B, found in Synechococcus sp. (strain WH7803).